A 266-amino-acid chain; its full sequence is tRNA pseudouridine synthase A (266 aa).

Catalysis depends on aspartate 56, which acts as the Nucleophile. Residue tyrosine 110 coordinates substrate.

It belongs to the tRNA pseudouridine synthase TruA family.

It catalyses the reaction uridine(38/39/40) in tRNA = pseudouridine(38/39/40) in tRNA. Its function is as follows. Formation of pseudouridine at positions 38, 39 and 40 in the anticodon stem and loop of transfer RNAs. This is tRNA pseudouridine synthase A from Halobacterium salinarum (strain ATCC 29341 / DSM 671 / R1).